The following is a 62-amino-acid chain: SPbeta prophage-derived uncharacterized protein YonU (62 aa).

A coiled-coil region spans residues Met-1–Arg-32.

This Bacillus subtilis (strain 168) protein is SPbeta prophage-derived uncharacterized protein YonU (yonU).